The sequence spans 300 residues: Nucleotide-binding protein MCCL_0516 (300 aa).

ATP is bound at residue 15–22 (GMSGAGKS). 66 to 69 (DLRG) lines the GTP pocket.

This sequence belongs to the RapZ-like family.

Its function is as follows. Displays ATPase and GTPase activities. This is Nucleotide-binding protein MCCL_0516 from Macrococcus caseolyticus (strain JCSC5402) (Macrococcoides caseolyticum).